A 218-amino-acid polypeptide reads, in one-letter code: Ribose-5-phosphate isomerase A (218 aa).

Substrate is bound by residues T28–T31, D81–D84, and K94–G97. E103 serves as the catalytic Proton acceptor. Substrate is bound at residue K121.

This sequence belongs to the ribose 5-phosphate isomerase family. As to quaternary structure, homodimer.

The catalysed reaction is aldehydo-D-ribose 5-phosphate = D-ribulose 5-phosphate. Its pathway is carbohydrate degradation; pentose phosphate pathway; D-ribose 5-phosphate from D-ribulose 5-phosphate (non-oxidative stage): step 1/1. Functionally, catalyzes the reversible conversion of ribose-5-phosphate to ribulose 5-phosphate. This is Ribose-5-phosphate isomerase A from Thioalkalivibrio sulfidiphilus (strain HL-EbGR7).